Here is a 245-residue protein sequence, read N- to C-terminus: Gas vesicle protein F (245 aa).

The protein belongs to the gas vesicle GvpF/GvpL family. As to quaternary structure, binds GvpA.

It localises to the gas vesicle. A minor component of the gas vesicle, may be involved in preventing GvpA aggregation during gas vesicle nucleation. Gas vesicles (GV) are hollow, gas filled proteinaceous nanostructures. During planktonic growth they allow positioning of the organism at a favorable depth for light or nutrient acquisition. This Dolichospermum flosaquae (Anabaena flos-aquae) protein is Gas vesicle protein F.